A 271-amino-acid chain; its full sequence is MFSIQQPLLVFSDLDGTLLDSHSYDWQPAAPWLTRLREANVPVILCSSKTSAEMLYLQKTLGLQGLPLIAENGAVIQLAEQWQEIDGFPRIISGISHGEISLVLNTLREKEHFKFTTFDDVDDATIAEWTGLSRSQAALTQLHEASVTLIWRDSDERMAQFTARLNELGLQFMQGARFWHVLDASAGKDQAANWIIATYQQLSGKRPTTLGLGDGPNDAPLLEVMDYAVIVKGLNREGVHLHDEDPARVWRTQREGPEGWREGLDHFFSAR.

The active-site Nucleophile is the aspartate 13. 3 residues coordinate Mg(2+): aspartate 13, aspartate 15, and aspartate 214.

The protein belongs to the HAD-like hydrolase superfamily. MPGP family. Mg(2+) serves as cofactor.

It localises to the cytoplasm. The catalysed reaction is 2-O-(alpha-D-mannosyl)-3-phosphoglycerate + H2O = (2R)-2-O-(alpha-D-mannosyl)-glycerate + phosphate. This chain is Mannosyl-3-phosphoglycerate phosphatase, found in Escherichia coli (strain K12 / DH10B).